The primary structure comprises 282 residues: Proteasome subunit beta (282 aa).

A propeptide spans 1-55 (removed in mature form; by autocatalysis); sequence MDNSSTGRYPAASLPPAYLRPGSSSFTDFLRAQAPELLPTARSFPEGSVVQAAHG. T56 acts as the Nucleophile in catalysis.

Belongs to the peptidase T1B family. The 20S proteasome core is composed of 14 alpha and 14 beta subunits that assemble into four stacked heptameric rings, resulting in a barrel-shaped structure. The two inner rings, each composed of seven catalytic beta subunits, are sandwiched by two outer rings, each composed of seven alpha subunits. The catalytic chamber with the active sites is on the inside of the barrel. Has a gated structure, the ends of the cylinder being occluded by the N-termini of the alpha-subunits. Is capped by the proteasome-associated ATPase, ARC.

It is found in the cytoplasm. The enzyme catalyses Cleavage of peptide bonds with very broad specificity.. It functions in the pathway protein degradation; proteasomal Pup-dependent pathway. Its activity is regulated as follows. The formation of the proteasomal ATPase ARC-20S proteasome complex, likely via the docking of the C-termini of ARC into the intersubunit pockets in the alpha-rings, may trigger opening of the gate for substrate entry. Interconversion between the open-gate and close-gate conformations leads to a dynamic regulation of the 20S proteasome proteolysis activity. Functionally, component of the proteasome core, a large protease complex with broad specificity involved in protein degradation. This is Proteasome subunit beta from Actinosynnema mirum (strain ATCC 29888 / DSM 43827 / JCM 3225 / NBRC 14064 / NCIMB 13271 / NRRL B-12336 / IMRU 3971 / 101).